Consider the following 434-residue polypeptide: Exopolygalacturonase X-1 (434 aa).

An N-terminal signal peptide occupies residues 1–22 (MKLSHLLTSAVSVLSLGLTVEG). Residues N113, N129, and N199 are each glycosylated (N-linked (GlcNAc...) asparagine). A PbH1 1 repeat occupies 231-252 (SKNIVIQNSVINNGDDCVSFKP). Residue D245 is the Proton donor of the active site. C247 and C264 form a disulfide bridge. N-linked (GlcNAc...) asparagine glycans are attached at residues N253 and N265. Residues 254–274 (STEILVQNLYCNGSHGISVGS) form a PbH1 2 repeat. Residue H268 is part of the active site. Residues N292, N297, N329, N354, and N364 are each glycosylated (N-linked (GlcNAc...) asparagine). A PbH1 3 repeat occupies 327 to 348 (VSNITYEDMYIENVDWAIEITQ). One copy of the PbH1 4 repeat lies at 362–405 (PSNLTISDVYISNMYGTTSSARDPNIGTIVCSSPDVCSNIYVEN). The cysteines at positions 392 and 398 are disulfide-linked. 2 N-linked (GlcNAc...) asparagine glycosylation sites follow: N423 and N430.

It belongs to the glycosyl hydrolase 28 family.

The protein resides in the secreted. It catalyses the reaction [(1-&gt;4)-alpha-D-galacturonosyl](n) + H2O = alpha-D-galacturonate + [(1-&gt;4)-alpha-D-galacturonosyl](n-1). Its function is as follows. Specific in hydrolyzing the terminal glycosidic bond of polygalacturonic acid and oligogalacturonates. The chain is Exopolygalacturonase X-1 (pgaX-1) from Emericella nidulans (strain FGSC A4 / ATCC 38163 / CBS 112.46 / NRRL 194 / M139) (Aspergillus nidulans).